We begin with the raw amino-acid sequence, 501 residues long: MVTSRADEISQIIRKRIEQYNTEVKIVNTGTVLQVGDGIARIYGLDDVMAGELVEFKEGTVGIALNLESKNVGVVLMGDGLMIQEGSSVKATGRIAQIPVSEGYLGRVVNALAKPIDGRGEISTSESRLIESPAPGIISRRSVYEPLQTGLIAIDSMIPIGRGQRELIIGDRQTGKTAVATDTILNQQGQNLVCVYVAIGQKASSVAQVVTTLQERGAMEYTIVVAETADSPATLQYLAPYTGAALAEYFMYRERHTLIIYDDPSKHAQAYRQMSLLLRRPPGREAYPGDVFYLHSRLLERVAKLSSQLGEGSMTALPIVETQSGDVSAYIPTNVISITDGQIFLSADLFNAGIRPAINVGISVSRVGSAAQIKAMKQVAGKLKLELAQFAELEAFAQFASDLDKATQNQLARGQRLRELLKQSQSAPLTVEEQIITIYTGTNSYLDSVEIAQVRKFIVELRAYLKTKKPKFNEIISSTKTFTGEAEAILKEAIQEQMELF.

Residue 170–177 coordinates ATP; it reads GDRQTGKT.

The protein belongs to the ATPase alpha/beta chains family. In terms of assembly, F-type ATPases have 2 components, CF(1) - the catalytic core - and CF(0) - the membrane proton channel. CF(1) has five subunits: alpha(3), beta(3), gamma(1), delta(1), epsilon(1). CF(0) has four main subunits: a, b, b' and c.

It localises to the plastid. It is found in the chloroplast thylakoid membrane. It catalyses the reaction ATP + H2O + 4 H(+)(in) = ADP + phosphate + 5 H(+)(out). In terms of biological role, produces ATP from ADP in the presence of a proton gradient across the membrane. The alpha chain is a regulatory subunit. The chain is ATP synthase subunit alpha, chloroplastic from Pisum sativum (Garden pea).